Reading from the N-terminus, the 403-residue chain is Acetyl-CoA acetyltransferase IA (403 aa).

Residue C91 is the Acyl-thioester intermediate of the active site. Catalysis depends on proton acceptor residues H353 and C383. A Microbody targeting signal motif is present at residues 401-403 (AKL).

The protein belongs to the thiolase-like superfamily. Thiolase family. Multimeric.

The protein localises to the peroxisome. The enzyme catalyses 2 acetyl-CoA = acetoacetyl-CoA + CoA. Its pathway is metabolic intermediate biosynthesis; (R)-mevalonate biosynthesis; (R)-mevalonate from acetyl-CoA: step 1/3. This Candida tropicalis (Yeast) protein is Acetyl-CoA acetyltransferase IA (PACTA).